A 93-amino-acid polypeptide reads, in one-letter code: Protein NONRESPONDING TO OXYLIPINS 2, mitochondrial (93 aa).

The transit peptide at 1–27 (MASRCRSLSKPAFSAFRSAMNKPSIRP) directs the protein to the mitochondrion.

In terms of tissue distribution, expressed in cotyledons, roots and flowers.

Its subcellular location is the mitochondrion. Its function is as follows. Essential for mitochondrial morphology, functionality and distribution. Contributes to 9-lipoxygenase (9-LOX)-derived oxylipin synthesis, but not to brassinosteroids (BRs) signaling. Required for waving-inducing oxylipin 9-hydroxyoctadecatrienoic acid and derivatives (e.g. 9-HOT, 2-HOE, 13-HOT, 13-HOD, 13-KOD, 12,13-KHOD, 9-HOT, 9-HOD, 9-KOT, 9-KOD and 9,10-KHOE)-mediated root development regulation, including callose deposition, root waving and lateral roots formation. Involved in basal plant defense toward pathogenic bacteria (e.g. Pseudomonas syringae pv tomato), both in compatible (e.g. Pst DC3000) and incompatible (e.g. Pst DC3000 avrRPM1) interactions, as well as against obligate biotrophic pathogenic fungi (e.g. Golovinomyces cichoracearum), probably via the promotion of callose deposition in the cell wall. Confers sensitivity to the herbicide isoxaben, a herbicide inhibiting cellulose synthesis and altering the cell wall. The chain is Protein NONRESPONDING TO OXYLIPINS 2, mitochondrial from Arabidopsis thaliana (Mouse-ear cress).